We begin with the raw amino-acid sequence, 145 residues long: uncharacterized protein (145 aa).

Residues 1–41 (MEQHYHQQNQLRQLKQQQLKELLQQQSKDKEEDEQKHDDYR) are a coiled coil. Positions 1-91 (MEQHYHQQNQ…LQISEPEGES (91 aa)) are disordered. Positions 7–26 (QQNQLRQLKQQQLKELLQQQ) are enriched in low complexity. Basic and acidic residues predominate over residues 27–42 (SKDKEEDEQKHDDYRS). The span at 43-58 (PTKTTTTTATSTSAAT) shows a compositional bias: low complexity.

This is an uncharacterized protein from Dictyostelium discoideum (Social amoeba).